Consider the following 383-residue polypeptide: MKIVALKEKVKNETRTAITPEVAGLLIKKGYAVTVEKDIGLYAGFLDEEYVAVGTKISSVPLEIISDADIILKVQPSSVTDKYSELEFAKQGAIVVGLLSPYLNHEYIKAAAKKNLTTFAMEFVPRITKAQNMDALSSQSNLVGYRAVIEASYHYTKAFPMMITAAGTISACKTLVLGVGVAGLQAIATAKRLGSIVAGYDVRIATKEQVESLGAKFVSPELQEDLEEESGYASESSADYKAKQEKFLAKIIKGYNIVITTAQIPGKKAPMLVTDKMIESMMYGSVIVDISTSTGGNVEGSEPDKIVTRHGVTIIGLLNLASKIASDSSKLYSKNLYNFLTYALQDGQFNMDDELVRDMLITKDGKIVNYIIREKYESITDNG.

Residues glutamine 131–aspartate 134, valine 181, aspartate 201–arginine 203, and glycine 231 each bind NAD(+).

It belongs to the AlaDH/PNT family. In terms of assembly, heterotrimer of two alpha chains and a beta (PntB) chain; in Rickettsia, the alpha chain is made of two subunits (PntAA and PntAB) and forms a dimer.

The catalysed reaction is NAD(+) + NADPH + H(+)(in) = NADH + NADP(+) + H(+)(out). Its function is as follows. The transhydrogenation between NADH and NADP is coupled to respiration and ATP hydrolysis and functions as a proton pump across the membrane. The sequence is that of NAD(P) transhydrogenase subunit alpha part 1 (pntAA) from Rickettsia prowazekii (strain Madrid E).